Consider the following 625-residue polypeptide: Chaperone protein HtpG (625 aa).

Positions 1 to 341 are a; substrate-binding; sequence MEKKQFQAES…SEDLSLNISR (341 aa). The interval 342–551 is b; that stretch reads EMLQHDRQLK…DGEITLEMEK (210 aa). The interval 552–625 is c; sequence VLQAMPDNQN…FSQNMCKVMV (74 aa).

The protein belongs to the heat shock protein 90 family. In terms of assembly, homodimer.

The protein localises to the cytoplasm. In terms of biological role, molecular chaperone. Has ATPase activity. This chain is Chaperone protein HtpG, found in Shouchella clausii (strain KSM-K16) (Alkalihalobacillus clausii).